The primary structure comprises 218 residues: Protein-lysine N-methyltransferase M142.8 (218 aa).

It belongs to the class I-like SAM-binding methyltransferase superfamily. EFM5 family.

Its subcellular location is the cytoplasm. In terms of biological role, S-adenosyl-L-methionine-dependent protein-lysine N-methyltransferase that methylates elongation factor 1-alpha. This Caenorhabditis elegans protein is Protein-lysine N-methyltransferase M142.8.